Here is a 277-residue protein sequence, read N- to C-terminus: MNDMGLVIVGAGGRMGQTLIRTVHAMEGVRVVGAIERSGSPHLGRDAGELAGIGIINVEICDEPLSVFAKADGVLDFTTPKATVEFAGYAAQARIVHVIGTTGLSGEDEAAIAAAARHATIVKSGNMSLGVNLLSVLVKQAARALDAADFDIEILEMHHRHKVDAPSGTALLLGEAAAEGRAIELADKSVRVRDGHTGPREAGTIGFATLRGGSVVGEHSVILAGIGERIVLSHLAEDRTIFARGAVKAALWARGRKPGLHSMLDVLGFTENSDQAR.

NAD(+)-binding positions include 10–15 (GAGGRM) and Glu36. Arg37 provides a ligand contact to NADP(+). Residues 100 to 102 (GTT) and 124 to 127 (SGNM) each bind NAD(+). Catalysis depends on His158, which acts as the Proton donor/acceptor. His159 is a (S)-2,3,4,5-tetrahydrodipicolinate binding site. Lys162 acts as the Proton donor in catalysis. 168 to 169 (GT) provides a ligand contact to (S)-2,3,4,5-tetrahydrodipicolinate.

The protein belongs to the DapB family.

The protein resides in the cytoplasm. The enzyme catalyses (S)-2,3,4,5-tetrahydrodipicolinate + NAD(+) + H2O = (2S,4S)-4-hydroxy-2,3,4,5-tetrahydrodipicolinate + NADH + H(+). It catalyses the reaction (S)-2,3,4,5-tetrahydrodipicolinate + NADP(+) + H2O = (2S,4S)-4-hydroxy-2,3,4,5-tetrahydrodipicolinate + NADPH + H(+). Its pathway is amino-acid biosynthesis; L-lysine biosynthesis via DAP pathway; (S)-tetrahydrodipicolinate from L-aspartate: step 4/4. In terms of biological role, catalyzes the conversion of 4-hydroxy-tetrahydrodipicolinate (HTPA) to tetrahydrodipicolinate. This is 4-hydroxy-tetrahydrodipicolinate reductase from Chelativorans sp. (strain BNC1).